The primary structure comprises 124 residues: Small ribosomal subunit protein bS6 (124 aa).

Positions 97 to 124 are disordered; that stretch reads EQGPSAMMRRGDRDRSNRSDRRRDRDAA. Residues 105-124 show a composition bias toward basic and acidic residues; the sequence is RRGDRDRSNRSDRRRDRDAA.

Belongs to the bacterial ribosomal protein bS6 family.

In terms of biological role, binds together with bS18 to 16S ribosomal RNA. The protein is Small ribosomal subunit protein bS6 of Zymomonas mobilis subsp. mobilis (strain ATCC 31821 / ZM4 / CP4).